We begin with the raw amino-acid sequence, 887 residues long: 3-hydroxy-3-methylglutaryl-coenzyme A reductase (887 aa).

Topologically, residues 1–9 (MLSRLFRMH) are cytoplasmic. A helical transmembrane segment spans residues 10–39 (GLFVASHPWEVIVGTVTLTICMMSMNMFTG). Over 40–56 (NNKICGWNYECPKFEED) the chain is Lumenal. Residues 57–78 (VLSSDIIILTITRCIAILYIYF) form a helical membrane-spanning segment. Residues 61–218 (DIIILTITRC…MTFFPACVSL (158 aa)) form the SSD domain. Positions 75–78 (YIYF) match the INSIG-binding motif motif. Over 79–89 (QFQNLRQLGSK) the chain is Cytoplasmic. Lysine 89 participates in a covalent cross-link: Glycyl lysine isopeptide (Lys-Gly) (interchain with G-Cter in ubiquitin). A helical transmembrane segment spans residues 90–114 (YILGIAGLFTIFSSFVFSTVVIHFL). At 115-123 (DKELTGLNE) the chain is on the lumenal side. Residues 124-149 (ALPFFLLLIDLSRASALAKFALSSNS) form a helical membrane-spanning segment. Residues 150–159 (QDEVRENIAR) lie on the Cytoplasmic side of the membrane. The helical transmembrane segment at 160 to 187 (GMAILGPTFTLDALVECLVIGVGTMSGV) threads the bilayer. The Lumenal segment spans residues 188–191 (RQLE). Residues 192–220 (IMCCFGCMSVLANYFVFMTFFPACVSLVL) form a helical membrane-spanning segment. Over 221–248 (ELSRESREGRPIWQLSHFARVLEEEENK) the chain is Cytoplasmic. Residue lysine 248 forms a Glycyl lysine isopeptide (Lys-Gly) (interchain with G-Cter in ubiquitin) linkage. A helical membrane pass occupies residues 249–275 (PNPVTQRVKMIMSLGLVLVHAHSRWIA). Over 276-314 (DPSPQNSTAEQAKVSLGLDEDVSKRIEPSVSLWQFYLSK) the chain is Lumenal. N-linked (GlcNAc...) asparagine glycosylation is present at asparagine 281. A helical transmembrane segment spans residues 315-339 (MISMDIEQVITLSLAFLLAVKYIFF). Residues 340–887 (EQAETESTLS…LQGTCTKKAA (548 aa)) lie on the Cytoplasmic side of the membrane. Residues glutamate 558, lysine 690, and aspartate 766 each act as charge relay system in the active site. Histidine 865 acts as the Proton donor in catalysis. The residue at position 871 (serine 871) is a Phosphoserine.

Belongs to the HMG-CoA reductase family. In terms of assembly, homotetramer. Homodimer. Interacts (via its SSD) with INSIG1; the interaction, accelerated by sterols, leads to the recruitment of HMGCR to AMFR/gp78 for its ubiquitination by the sterol-mediated ERAD pathway. Interacts with UBIAD1. Undergoes sterol-mediated ubiquitination and ER-associated degradation (ERAD). Accumulation of sterols in the endoplasmic reticulum (ER) membrane, triggers binding of the reductase to the ER membrane protein INSIG1 or INSIG2. The INSIG1 binding leads to the recruitment of the ubiquitin ligase, AMFR/gp78, RNF139 or RNF145, initiating ubiquitination of the reductase. The ubiquitinated reductase is then extracted from the ER membrane and delivered to cytosolic 26S proteosomes by a mechanism probably mediated by the ATPase Valosin-containing protein VCP/p97. The INSIG2-binding leads to the recruitment of the ubiquitin ligase RNF139, initiating ubiquitination of the reductase. Lys-248 is the main site of ubiquitination. Ubiquitination is enhanced by the presence of a geranylgeranylated protein. Post-translationally, N-glycosylated. Deglycosylated by NGLY1 on release from the endoplasmic reticulum (ER) in a sterol-mediated manner. In terms of processing, phosphorylated. Phosphorylation at Ser-871 reduces the catalytic activity.

It is found in the endoplasmic reticulum membrane. The protein resides in the peroxisome membrane. It carries out the reaction (R)-mevalonate + 2 NADP(+) + CoA = (3S)-3-hydroxy-3-methylglutaryl-CoA + 2 NADPH + 2 H(+). It participates in metabolic intermediate biosynthesis; (R)-mevalonate biosynthesis; (R)-mevalonate from acetyl-CoA: step 3/3. With respect to regulation, regulated by a negative feedback mechanism through sterols and non-sterol metabolites derived from mevalonate. Phosphorylation at Ser-871 down-regulates the catalytic activity. In terms of biological role, catalyzes the conversion of (3S)-hydroxy-3-methylglutaryl-CoA (HMG-CoA) to mevalonic acid, the rate-limiting step in the synthesis of cholesterol and other isoprenoids, thus plays a critical role in cellular cholesterol homeostasis. The chain is 3-hydroxy-3-methylglutaryl-coenzyme A reductase (Hmgcr) from Mus musculus (Mouse).